Here is a 172-residue protein sequence, read N- to C-terminus: Adenine phosphoribosyltransferase (172 aa).

It belongs to the purine/pyrimidine phosphoribosyltransferase family. As to quaternary structure, homodimer.

Its subcellular location is the cytoplasm. It carries out the reaction AMP + diphosphate = 5-phospho-alpha-D-ribose 1-diphosphate + adenine. It functions in the pathway purine metabolism; AMP biosynthesis via salvage pathway; AMP from adenine: step 1/1. In terms of biological role, catalyzes a salvage reaction resulting in the formation of AMP, that is energically less costly than de novo synthesis. This Prochlorococcus marinus (strain NATL2A) protein is Adenine phosphoribosyltransferase.